A 335-amino-acid polypeptide reads, in one-letter code: Cytoskeleton protein RodZ (335 aa).

Residues 1 to 111 are Cytoplasmic-facing; it reads MNTEATHDQN…LGKRRKKRDG (111 aa). The region spanning 19-71 is the HTH cro/C1-type domain; sequence LRNAREQLGLSQQAVAERLCLKVSTVRDIEEDKAPADLASTFLRGYIRSYARL. Residues 30–49 constitute a DNA-binding region (H-T-H motif); the sequence is QQAVAERLCLKVSTVRDIEE. A helical; Signal-anchor for type II membrane protein membrane pass occupies residues 112–132; sequence WLMTFTWLVLFVVIGLSGAWW. Topologically, residues 133-335 are periplasmic; sequence WQDHKAQQEE…TLNAEQSPAQ (203 aa). The segment covering 148–164 has biased composition (polar residues); sequence DQSSAELNNNQSQSVPL. A disordered region spans residues 148-244; that stretch reads DQSSAELNNN…PLPTDQAGVT (97 aa). Low complexity-rich tracts occupy residues 165 to 205 and 217 to 239; these read DTST…DPQQ and DTAA…LPTD.

This sequence belongs to the RodZ family.

It is found in the cell inner membrane. Its function is as follows. Cytoskeletal protein that is involved in cell-shape control through regulation of the length of the long axis. In Escherichia coli O127:H6 (strain E2348/69 / EPEC), this protein is Cytoskeleton protein RodZ.